A 79-amino-acid chain; its full sequence is DNA-directed RNA polymerase subunit omega (79 aa).

This sequence belongs to the RNA polymerase subunit omega family. As to quaternary structure, the RNAP catalytic core consists of 2 alpha, 1 beta, 1 beta' and 1 omega subunit. When a sigma factor is associated with the core the holoenzyme is formed, which can initiate transcription.

The catalysed reaction is RNA(n) + a ribonucleoside 5'-triphosphate = RNA(n+1) + diphosphate. Its function is as follows. Promotes RNA polymerase assembly. Latches the N- and C-terminal regions of the beta' subunit thereby facilitating its interaction with the beta and alpha subunits. In Kosmotoga olearia (strain ATCC BAA-1733 / DSM 21960 / TBF 19.5.1), this protein is DNA-directed RNA polymerase subunit omega.